A 254-amino-acid chain; its full sequence is Coproheme decarboxylase (254 aa).

Fe-coproporphyrin III is bound by residues Arg136, 150–154 (YPMDK), His177, Gln190, and Ser228. The active site involves Tyr150.

This sequence belongs to the ChdC family. Type 1 subfamily. Requires Fe-coproporphyrin III as cofactor.

It catalyses the reaction Fe-coproporphyrin III + 2 H2O2 + 2 H(+) = heme b + 2 CO2 + 4 H2O. The catalysed reaction is Fe-coproporphyrin III + H2O2 + H(+) = harderoheme III + CO2 + 2 H2O. It carries out the reaction harderoheme III + H2O2 + H(+) = heme b + CO2 + 2 H2O. It participates in porphyrin-containing compound metabolism; protoheme biosynthesis. Involved in coproporphyrin-dependent heme b biosynthesis. Catalyzes the decarboxylation of Fe-coproporphyrin III (coproheme) to heme b (protoheme IX), the last step of the pathway. The reaction occurs in a stepwise manner with a three-propionate harderoheme intermediate. This Bacillus subtilis (strain 168) protein is Coproheme decarboxylase.